A 273-amino-acid chain; its full sequence is Transposable element Tc1 transposase (273 aa).

The protein belongs to the transposase 5 family.

The protein resides in the nucleus. Probably essential for transposable element Tc1 transposition. The insertion of Tc1 is the main cause of spontaneous mutations. It is an endonuclease which can produce a single strand nick at the 5'-end of the transposon. In Caenorhabditis elegans, this protein is Transposable element Tc1 transposase (tc1a).